The chain runs to 410 residues: Lysosome-associated membrane glycoprotein 2 (410 aa).

The first 28 residues, 1 to 28, serve as a signal peptide directing secretion; it reads MVCFRLFPVPGSGLVLVCLVLGAVRSYA. The tract at residues 29 to 192 is first lumenal domain; the sequence is LELNLTDSEN…STNEFLCDKD (164 aa). Over 29 to 375 the chain is Lumenal; sequence LELNLTDSEN…QDCSADDDNF (347 aa). N-linked (GlcNAc...) (polylactosaminoglycan) asparagine glycans are attached at residues Asn-32 and Asn-38. Residues Cys-41 and Cys-79 are joined by a disulfide bond. Asn-49, Asn-58, Asn-75, Asn-101, Asn-123, and Asn-179 each carry an N-linked (GlcNAc...) asparagine glycan. Cys-153 and Cys-189 are oxidised to a cystine. The tract at residues 193-228 is hinge; it reads KTSTVAPTIHTTVPSPTTTPTPKEKPEAGTYSVNNG. O-linked (GalNAc...) serine glycosylation occurs at Ser-195. O-linked (GalNAc...) threonine glycosylation is found at Thr-196, Thr-200, Thr-203, and Thr-204. The segment covering 199–213 has biased composition (low complexity); it reads PTIHTTVPSPTTTPT. The tract at residues 199–221 is disordered; that stretch reads PTIHTTVPSPTTTPTPKEKPEAG. An O-linked (GalNAc...) serine; partial glycan is attached at Ser-207. A glycan (O-linked (GalNAc...) threonine; partial) is linked at Thr-209. O-linked (GalNAc...) threonine glycans are attached at residues Thr-210 and Thr-211. Residue Thr-213 is glycosylated (O-linked (GalNAc...) threonine; partial). N-linked (GlcNAc...) asparagine glycosylation is found at Asn-229, Asn-242, Asn-257, Asn-275, and Asn-300. Residues 229–375 form a second lumenal domain region; that stretch reads NDTCLLATMG…QDCSADDDNF (147 aa). The cysteines at positions 232 and 265 are disulfide-linked. Residue Asn-307 is glycosylated (N-linked (GlcNAc...) (polylactosaminoglycan) asparagine). Residues Asn-317 and Asn-356 are each glycosylated (N-linked (GlcNAc...) asparagine). A disulfide bond links Cys-331 and Cys-368. The helical transmembrane segment at 376–399 threads the bilayer; the sequence is LVPIAVGAALAGVLILVLLAYFIG. Residues 400-410 lie on the Cytoplasmic side of the membrane; that stretch reads LKHHHAGYEQF. The interval 401-404 is important for binding and subsequent lysosomal degradation of target proteins; it reads KHHH.

This sequence belongs to the LAMP family. As to quaternary structure, monomer. Homodimer. Homotrimer. Forms large homooligomers. Interacts (via its cytoplasmic region) with HSPA8; HSPA8 mediates recruitment of proteins with a KFERQ motif to the surface of the lysosome for chaperone-mediated autophagy. Interacts with HSP90 in the lysosome lumen; this enhances LAMP2 stability. Interacts with MLLT11. Interacts with ABCB9. Interacts with FURIN. Interacts with CT55; this interaction may be important for LAMP2 protein stability. Interacts with TMEM175; inhibiting the proton channel activity of TMEM175. Forms a ternary complex with RAB7A and RUFY4 (via RUN domain); the interaction with RAB7A is mediated by RUFY4 (via RUN and coiled coil domains). (Microbial infection) Interacts with mumps virus protein F; this interaction promotes protein F cleavage by FURIN. Post-translationally, O- and N-glycosylated; some of the 16 N-linked glycans are polylactosaminoglycans. Isoform LAMP-2A is highly expressed in placenta, lung and liver, less in kidney and pancreas, low in brain and skeletal muscle. Isoform LAMP-2B is detected in spleen, thymus, prostate, testis, small intestine, colon, skeletal muscle, brain, placenta, lung, kidney, ovary and pancreas and liver. Isoform LAMP-2C is detected in small intestine, colon, heart, brain, skeletal muscle, and at lower levels in kidney and placenta.

It localises to the lysosome membrane. Its subcellular location is the endosome membrane. It is found in the cell membrane. The protein localises to the cytoplasmic vesicle. The protein resides in the autophagosome membrane. In terms of biological role, lysosomal membrane glycoprotein which plays an important role in lysosome biogenesis, lysosomal pH regulation and autophagy. Acts as an important regulator of lysosomal lumen pH regulation by acting as a direct inhibitor of the proton channel TMEM175, facilitating lysosomal acidification for optimal hydrolase activity. Plays an important role in chaperone-mediated autophagy, a process that mediates lysosomal degradation of proteins in response to various stresses and as part of the normal turnover of proteins with a long biological half-live. Functions by binding target proteins, such as GAPDH, NLRP3 and MLLT11, and targeting them for lysosomal degradation. In the chaperone-mediated autophagy, acts downstream of chaperones, such as HSPA8/HSC70, which recognize and bind substrate proteins and mediate their recruitment to lysosomes, where target proteins bind LAMP2. Plays a role in lysosomal protein degradation in response to starvation. Required for the fusion of autophagosomes with lysosomes during autophagy. Cells that lack LAMP2 express normal levels of VAMP8, but fail to accumulate STX17 on autophagosomes, which is the most likely explanation for the lack of fusion between autophagosomes and lysosomes. Required for normal degradation of the contents of autophagosomes. Required for efficient MHC class II-mediated presentation of exogenous antigens via its function in lysosomal protein degradation; antigenic peptides generated by proteases in the endosomal/lysosomal compartment are captured by nascent MHC II subunits. Is not required for efficient MHC class II-mediated presentation of endogenous antigens. Functionally, modulates chaperone-mediated autophagy. Decreases presentation of endogenous antigens by MHCII. Does not play a role in the presentation of exogenous and membrane-derived antigens by MHCII. (Microbial infection) Supports the FURIN-mediated cleavage of mumps virus fusion protein F by interacting with both FURIN and the unprocessed form but not the processed form of the viral protein F. In Homo sapiens (Human), this protein is Lysosome-associated membrane glycoprotein 2 (LAMP2).